The following is a 522-amino-acid chain: Probable protein kinase UbiB (522 aa).

A Protein kinase domain is found at 119–497 (SFERVPVASA…QRRTNRLLQS (379 aa)). Residues 125–133 (VASASIAQV) and lysine 151 each bind ATP. Aspartate 286 serves as the catalytic Proton acceptor. The chain crosses the membrane as a helical span at residues 496-516 (QSIIYGGMGFVLGLLALQFLI).

The protein belongs to the ABC1 family. UbiB subfamily.

It localises to the cell inner membrane. It participates in cofactor biosynthesis; ubiquinone biosynthesis [regulation]. In terms of biological role, is probably a protein kinase regulator of UbiI activity which is involved in aerobic coenzyme Q (ubiquinone) biosynthesis. This is Probable protein kinase UbiB from Paracidovorax citrulli (strain AAC00-1) (Acidovorax citrulli).